A 650-amino-acid chain; its full sequence is Fructose-1,6-bisphosphatase class 3 (650 aa).

This sequence belongs to the FBPase class 3 family. Requires Mn(2+) as cofactor.

It catalyses the reaction beta-D-fructose 1,6-bisphosphate + H2O = beta-D-fructose 6-phosphate + phosphate. It functions in the pathway carbohydrate biosynthesis; gluconeogenesis. This is Fructose-1,6-bisphosphatase class 3 from Staphylococcus saprophyticus subsp. saprophyticus (strain ATCC 15305 / DSM 20229 / NCIMB 8711 / NCTC 7292 / S-41).